The primary structure comprises 495 residues: ATP synthase subunit beta, chloroplastic (495 aa).

An ATP-binding site is contributed by glycine 172–threonine 179.

Belongs to the ATPase alpha/beta chains family. In terms of assembly, F-type ATPases have 2 components, CF(1) - the catalytic core - and CF(0) - the membrane proton channel. CF(1) has five subunits: alpha(3), beta(3), gamma(1), delta(1), epsilon(1). CF(0) has four main subunits: a(1), b(1), b'(1) and c(9-12).

It localises to the plastid. It is found in the chloroplast thylakoid membrane. The catalysed reaction is ATP + H2O + 4 H(+)(in) = ADP + phosphate + 5 H(+)(out). In terms of biological role, produces ATP from ADP in the presence of a proton gradient across the membrane. The catalytic sites are hosted primarily by the beta subunits. The chain is ATP synthase subunit beta, chloroplastic from Beaucarnea recurvata (Elephant-foot tree).